We begin with the raw amino-acid sequence, 37 residues long: U4-theraphotoxin-Hhn1v (37 aa).

Disulfide bonds link cysteine 3–cysteine 17, cysteine 7–cysteine 28, and cysteine 22–cysteine 33.

This sequence belongs to the neurotoxin 12 (Hwtx-2) family. 02 (Hwtx-2) subfamily. As to expression, expressed by the venom gland.

It localises to the secreted. In terms of biological role, postsynaptic neurotoxin. The protein is U4-theraphotoxin-Hhn1v of Cyriopagopus hainanus (Chinese bird spider).